A 379-amino-acid polypeptide reads, in one-letter code: RNA-splicing ligase RtcB2 (379 aa).

5 residues coordinate Mn(2+): D74, C77, H137, H168, and H239. 136-140 (NHFVE) is a binding site for GMP. Residues 239–240 (HN), S277, 294–297 (HGAG), and K372 each bind GMP. Residue H294 is the GMP-histidine intermediate of the active site.

It belongs to the RtcB family. RtcB2 subfamily. It depends on Mn(2+) as a cofactor.

It catalyses the reaction a 3'-end 3'-phospho-ribonucleotide-RNA + a 5'-end dephospho-ribonucleoside-RNA + GTP = a ribonucleotidyl-ribonucleotide-RNA + GMP + diphosphate. Its function is as follows. GTP-dependent RNA ligase involved in rRNA repair. Repairs damaged 16S rRNA in 30S subunits that has been cleaved between adenine-1493 and guanosine-1494 (E.coli nubering). This specific cleavage is inflicted by CdiA (ECL_04451) or by colicin E3-type (ColE3) proteins. Poorly repairs damaged rRNA in the 70S ribosome; addition of release factor PrfH improves repair about 3-fold in vitro, probably because PrfH hydrolyzes the nascent chain allowing ribosomal subunit dissociation. In vivo the PrfH-RtcB2 pair restores growth in the presence of ribotoxins that specifically create this damage. Does not repair damaged tRNA (tested with tRNA(Asp) and tRNA(Arg)). This Escherichia coli (strain ATCC 25922 / DSM 1103 / LMG 8223 / NCIMB 12210 / NCTC 12241 / WDCM 00013 / Seattle 1946) protein is RNA-splicing ligase RtcB2.